The sequence spans 141 residues: Guanyl-specific ribonuclease Sa3 (141 aa).

A signal peptide (or 43) is located at residues 1 to 36; that stretch reads MRIPPRLVALAGAAAVAATLIAGPVAAAAPASHAVA. Cys52 and Cys141 are joined by a disulfide. Residue Glu99 is the Proton acceptor of the active site. Residue His130 is the Proton donor of the active site.

Belongs to the ribonuclease N1/T1 family.

It is found in the secreted. The enzyme catalyses [RNA] containing guanosine + H2O = an [RNA fragment]-3'-guanosine-3'-phosphate + a 5'-hydroxy-ribonucleotide-3'-[RNA fragment].. This is Guanyl-specific ribonuclease Sa3 (rnaSA3) from Kitasatospora aureofaciens (Streptomyces aureofaciens).